The primary structure comprises 206 residues: Large ribosomal subunit protein uL3 (206 aa).

The interval 127–151 is disordered; that stretch reads SGGPSSHGSKFHRHLGGTGQATTPA.

This sequence belongs to the universal ribosomal protein uL3 family. In terms of assembly, part of the 50S ribosomal subunit. Forms a cluster with proteins L14 and L19.

Its function is as follows. One of the primary rRNA binding proteins, it binds directly near the 3'-end of the 23S rRNA, where it nucleates assembly of the 50S subunit. The protein is Large ribosomal subunit protein uL3 of Borreliella burgdorferi (strain ATCC 35210 / DSM 4680 / CIP 102532 / B31) (Borrelia burgdorferi).